We begin with the raw amino-acid sequence, 145 residues long: 3-hydroxyacyl-[acyl-carrier-protein] dehydratase FabZ (145 aa).

The active site involves H49.

This sequence belongs to the thioester dehydratase family. FabZ subfamily.

Its subcellular location is the cytoplasm. It carries out the reaction a (3R)-hydroxyacyl-[ACP] = a (2E)-enoyl-[ACP] + H2O. Its function is as follows. Involved in unsaturated fatty acids biosynthesis. Catalyzes the dehydration of short chain beta-hydroxyacyl-ACPs and long chain saturated and unsaturated beta-hydroxyacyl-ACPs. The polypeptide is 3-hydroxyacyl-[acyl-carrier-protein] dehydratase FabZ (Rickettsia bellii (strain OSU 85-389)).